Here is a 181-residue protein sequence, read N- to C-terminus: NADH-quinone oxidoreductase subunit B 2 (181 aa).

The [4Fe-4S] cluster site is built by cysteine 44, cysteine 45, cysteine 110, and cysteine 139.

This sequence belongs to the complex I 20 kDa subunit family. In terms of assembly, NDH-1 is composed of 14 different subunits. Subunits NuoB, C, D, E, F, and G constitute the peripheral sector of the complex. It depends on [4Fe-4S] cluster as a cofactor.

It is found in the cell inner membrane. The catalysed reaction is a quinone + NADH + 5 H(+)(in) = a quinol + NAD(+) + 4 H(+)(out). Functionally, NDH-1 shuttles electrons from NADH, via FMN and iron-sulfur (Fe-S) centers, to quinones in the respiratory chain. The immediate electron acceptor for the enzyme in this species is believed to be a menaquinone. Couples the redox reaction to proton translocation (for every two electrons transferred, four hydrogen ions are translocated across the cytoplasmic membrane), and thus conserves the redox energy in a proton gradient. This is NADH-quinone oxidoreductase subunit B 2 from Cytophaga hutchinsonii (strain ATCC 33406 / DSM 1761 / CIP 103989 / NBRC 15051 / NCIMB 9469 / D465).